The sequence spans 194 residues: Fe/S biogenesis protein NfuA (194 aa).

C152 and C155 together coordinate [4Fe-4S] cluster.

Belongs to the NfuA family. Homodimer. [4Fe-4S] cluster is required as a cofactor.

Its function is as follows. Involved in iron-sulfur cluster biogenesis. Binds a 4Fe-4S cluster, can transfer this cluster to apoproteins, and thereby intervenes in the maturation of Fe/S proteins. Could also act as a scaffold/chaperone for damaged Fe/S proteins. The polypeptide is Fe/S biogenesis protein NfuA (Pseudomonas fluorescens (strain SBW25)).